We begin with the raw amino-acid sequence, 209 residues long: Large ribosomal subunit protein uL3 (209 aa).

Gln-150 bears the N5-methylglutamine mark.

The protein belongs to the universal ribosomal protein uL3 family. Part of the 50S ribosomal subunit. Forms a cluster with proteins L14 and L19. In terms of processing, methylated by PrmB.

Its function is as follows. One of the primary rRNA binding proteins, it binds directly near the 3'-end of the 23S rRNA, where it nucleates assembly of the 50S subunit. The protein is Large ribosomal subunit protein uL3 of Vibrio vulnificus (strain YJ016).